A 968-amino-acid chain; its full sequence is RNA polymerase-associated protein RapA (968 aa).

In terms of domain architecture, Helicase ATP-binding spans 164–334 (DVGRRHAPRV…FARLRLLDPN (171 aa)). 177-184 (DEVGLGKT) lines the ATP pocket. The DEAH box signature appears at 280–283 (DEAH). The region spanning 490 to 662 (RVEWLMGYLT…YLASPDQTEG (173 aa)) is the Helicase C-terminal domain.

This sequence belongs to the SNF2/RAD54 helicase family. RapA subfamily. In terms of assembly, interacts with the RNAP. Has a higher affinity for the core RNAP than for the holoenzyme. Its ATPase activity is stimulated by binding to RNAP.

Its function is as follows. Transcription regulator that activates transcription by stimulating RNA polymerase (RNAP) recycling in case of stress conditions such as supercoiled DNA or high salt concentrations. Probably acts by releasing the RNAP, when it is trapped or immobilized on tightly supercoiled DNA. Does not activate transcription on linear DNA. Probably not involved in DNA repair. The chain is RNA polymerase-associated protein RapA from Shigella boydii serotype 18 (strain CDC 3083-94 / BS512).